A 353-amino-acid polypeptide reads, in one-letter code: MDDKTSKAAAAEKAKALAAALSQIEKQFGKGSIMRYGDNEVEHDIQVVSTGSLGLDIALGVGGLPRGRVIEVYGPESSGKTTLTLQVIAEMQKLGGTCAFVDAEHALDVQYASKLGVNLTDLLISQPDTGEQALEITDALVRSGSVDLIVIDSVAALVPKAEIEGEMGDSLPGLQARLMSQALRKLTATIKRTNCMVIFINQIRMKIGVMFGNPETTTGGNALKFYSSVRLDIRRIGAIKKGDEVVGNETRVKVVKNKVAPPFKQAEFDIMYGSGISREGEIIDLGVQANVVDKSGAWYSYSGNRIGQGKDNVREYLKEHKEMAIEIENKVRENQGIVSRAATFPASEAEDGE.

74-81 provides a ligand contact to ATP; that stretch reads GPESSGKT.

Belongs to the RecA family.

The protein resides in the cytoplasm. Functionally, can catalyze the hydrolysis of ATP in the presence of single-stranded DNA, the ATP-dependent uptake of single-stranded DNA by duplex DNA, and the ATP-dependent hybridization of homologous single-stranded DNAs. It interacts with LexA causing its activation and leading to its autocatalytic cleavage. In Bordetella bronchiseptica (strain ATCC BAA-588 / NCTC 13252 / RB50) (Alcaligenes bronchisepticus), this protein is Protein RecA.